Reading from the N-terminus, the 147-residue chain is Ubiquitin-conjugating enzyme E2 4 (147 aa).

The UBC core domain occupies 1–147 (MSLKRINKEL…AKEWTKKYAV (147 aa)). Residue cysteine 85 is the Glycyl thioester intermediate of the active site.

The protein belongs to the ubiquitin-conjugating enzyme family.

The catalysed reaction is S-ubiquitinyl-[E1 ubiquitin-activating enzyme]-L-cysteine + [E2 ubiquitin-conjugating enzyme]-L-cysteine = [E1 ubiquitin-activating enzyme]-L-cysteine + S-ubiquitinyl-[E2 ubiquitin-conjugating enzyme]-L-cysteine.. The protein operates within protein modification; protein ubiquitination. Its function is as follows. E2 ubiquitin-conjugating enzyme that catalyzes the covalent attachment of ubiquitin to other proteins. Mediates the selective degradation of short-lived and abnormal proteins. Mediates ubiquitination of PEX5. This chain is Ubiquitin-conjugating enzyme E2 4 (UBC4), found in Candida albicans (Yeast).